The sequence spans 197 residues: Nucleoid occlusion factor SlmA (197 aa).

The region spanning 7 to 67 (INRREHILQC…GLIEFIEESL (61 aa)) is the HTH tetR-type domain. Positions 30–49 (TTAKLASEVGVSEAALYRHF) form a DNA-binding region, H-T-H motif. The stretch at 109–136 (DALLGENERLRSRISNLFAKIETQLKQI) forms a coiled coil.

The protein belongs to the nucleoid occlusion factor SlmA family. Homodimer. Interacts with FtsZ.

The protein resides in the cytoplasm. The protein localises to the nucleoid. Its function is as follows. Required for nucleoid occlusion (NO) phenomenon, which prevents Z-ring formation and cell division over the nucleoid. Acts as a DNA-associated cell division inhibitor that binds simultaneously chromosomal DNA and FtsZ, and disrupts the assembly of FtsZ polymers. SlmA-DNA-binding sequences (SBS) are dispersed on non-Ter regions of the chromosome, preventing FtsZ polymerization at these regions. This chain is Nucleoid occlusion factor SlmA, found in Shewanella baltica (strain OS223).